The sequence spans 755 residues: 1,4-alpha-glucan branching enzyme GlgB (755 aa).

Aspartate 431 serves as the catalytic Nucleophile. Catalysis depends on glutamate 484, which acts as the Proton donor.

This sequence belongs to the glycosyl hydrolase 13 family. GlgB subfamily. In terms of assembly, monomer.

The enzyme catalyses Transfers a segment of a (1-&gt;4)-alpha-D-glucan chain to a primary hydroxy group in a similar glucan chain.. It participates in glycan biosynthesis; glycogen biosynthesis. Functionally, catalyzes the formation of the alpha-1,6-glucosidic linkages in glycogen by scission of a 1,4-alpha-linked oligosaccharide from growing alpha-1,4-glucan chains and the subsequent attachment of the oligosaccharide to the alpha-1,6 position. The polypeptide is 1,4-alpha-glucan branching enzyme GlgB (Prochlorococcus marinus (strain NATL2A)).